The chain runs to 744 residues: Sorting nexin MVP1 (744 aa).

Disordered regions lie at residues 1–40, 218–252, and 273–299; these read MNSN…ATTT, NRSI…GGGG, and SRSV…GSGT. Composition is skewed to polar residues over residues 26–40 and 218–243; these read TSIN…ATTT and NRSI…STTI. A compositionally biased stretch (gly residues) spans 283-297; it reads QGGGGGSGGGSGSGS. A PX domain is found at 326–444; sequence GIDLIKIKEV…SFLTVPTDLT (119 aa). Residues Arg-369, Ser-371, Lys-395, and Arg-410 each contribute to the a 1,2-diacyl-sn-glycero-3-phospho-(1D-myo-inositol-3-phosphate) site.

It belongs to the sorting nexin family.

The protein resides in the cytoplasm. The protein localises to the membrane. Required for vacuolar protein sorting. The sequence is that of Sorting nexin MVP1 (MVP1) from Candida albicans (strain SC5314 / ATCC MYA-2876) (Yeast).